Reading from the N-terminus, the 186-residue chain is ATP synthase subunit delta (186 aa).

The protein belongs to the ATPase delta chain family. As to quaternary structure, F-type ATPases have 2 components, F(1) - the catalytic core - and F(0) - the membrane proton channel. F(1) has five subunits: alpha(3), beta(3), gamma(1), delta(1), epsilon(1). CF(0) has four main subunits: a(1), b(1), b'(1) and c(10-14). The alpha and beta chains form an alternating ring which encloses part of the gamma chain. F(1) is attached to F(0) by a central stalk formed by the gamma and epsilon chains, while a peripheral stalk is formed by the delta, b and b' chains.

It localises to the cell inner membrane. Functionally, f(1)F(0) ATP synthase produces ATP from ADP in the presence of a proton or sodium gradient. F-type ATPases consist of two structural domains, F(1) containing the extramembraneous catalytic core and F(0) containing the membrane proton channel, linked together by a central stalk and a peripheral stalk. During catalysis, ATP synthesis in the catalytic domain of F(1) is coupled via a rotary mechanism of the central stalk subunits to proton translocation. This protein is part of the stalk that links CF(0) to CF(1). It either transmits conformational changes from CF(0) to CF(1) or is implicated in proton conduction. This chain is ATP synthase subunit delta, found in Rhodopseudomonas palustris (strain ATCC BAA-98 / CGA009).